Here is a 374-residue protein sequence, read N- to C-terminus: UDP-N-acetylglucosamine--N-acetylmuramyl-(pentapeptide) pyrophosphoryl-undecaprenol N-acetylglucosamine transferase (374 aa).

Residues 14–16, Asn125, Arg168, Ser196, and Gln297 each bind UDP-N-acetyl-alpha-D-glucosamine; that span reads TGG.

This sequence belongs to the glycosyltransferase 28 family. MurG subfamily.

The protein localises to the cell inner membrane. It carries out the reaction di-trans,octa-cis-undecaprenyl diphospho-N-acetyl-alpha-D-muramoyl-L-alanyl-D-glutamyl-meso-2,6-diaminopimeloyl-D-alanyl-D-alanine + UDP-N-acetyl-alpha-D-glucosamine = di-trans,octa-cis-undecaprenyl diphospho-[N-acetyl-alpha-D-glucosaminyl-(1-&gt;4)]-N-acetyl-alpha-D-muramoyl-L-alanyl-D-glutamyl-meso-2,6-diaminopimeloyl-D-alanyl-D-alanine + UDP + H(+). It functions in the pathway cell wall biogenesis; peptidoglycan biosynthesis. Functionally, cell wall formation. Catalyzes the transfer of a GlcNAc subunit on undecaprenyl-pyrophosphoryl-MurNAc-pentapeptide (lipid intermediate I) to form undecaprenyl-pyrophosphoryl-MurNAc-(pentapeptide)GlcNAc (lipid intermediate II). This Rhodopseudomonas palustris (strain BisA53) protein is UDP-N-acetylglucosamine--N-acetylmuramyl-(pentapeptide) pyrophosphoryl-undecaprenol N-acetylglucosamine transferase.